Consider the following 279-residue polypeptide: Peptide deformylase 1B, chloroplastic (279 aa).

2 residues coordinate Fe cation: Cys-177 and His-219. Residue Glu-220 is part of the active site. Residue His-223 participates in Fe cation binding.

The protein belongs to the polypeptide deformylase family. Fe(2+) is required as a cofactor.

It is found in the plastid. The protein resides in the chloroplast. It catalyses the reaction N-terminal N-formyl-L-methionyl-[peptide] + H2O = N-terminal L-methionyl-[peptide] + formate. In terms of biological role, removes the formyl group from the N-terminal Met of newly synthesized proteins. This chain is Peptide deformylase 1B, chloroplastic (PDF1B), found in Solanum lycopersicum (Tomato).